Consider the following 210-residue polypeptide: Dynein regulatory complex protein 12 (210 aa).

Positions 1-23 are disordered; the sequence is MPPKNKEKGKKSGAQKKKKNWGA. The segment covering 7–20 has biased composition (basic residues); it reads EKGKKSGAQKKKKN. A coiled-coil region spans residues 49 to 161; sequence RDEARRAKAS…EAKYEEILHD (113 aa). The tract at residues 188-210 is disordered; sequence HKEQQRQFGLTPPGSLRPPAPSL.

Belongs to the DRC12 family. Component of the nexin-dynein regulatory complex (N-DRC).

It is found in the cytoplasm. It localises to the cytoskeleton. The protein localises to the flagellum axoneme. Component of the nexin-dynein regulatory complex (N-DRC), a key regulator of ciliary/flagellar motility which maintains the alignment and integrity of the distal axoneme and regulates microtubule sliding in motile axonemes. This chain is Dynein regulatory complex protein 12, found in Homo sapiens (Human).